A 260-amino-acid chain; its full sequence is Ribonuclease 3 (260 aa).

Residues 1–24 (MAQSSKYQRKPRSGERKRSQRRLE) are disordered. Basic and acidic residues predominate over residues 12-24 (RSGERKRSQRRLE). The region spanning 33 to 162 (FDDLLVRTGL…FIGALYMDQG (130 aa)) is the RNase III domain. Residue Glu75 participates in Mg(2+) binding. Asp79 is an active-site residue. Mg(2+)-binding residues include Asp148 and Glu151. Glu151 is a catalytic residue. One can recognise a DRBM domain in the interval 188-257 (DFKSQLQEFV…AKQALLALNQ (70 aa)).

The protein belongs to the ribonuclease III family. In terms of assembly, homodimer. Requires Mg(2+) as cofactor.

It is found in the cytoplasm. It catalyses the reaction Endonucleolytic cleavage to 5'-phosphomonoester.. Digests double-stranded RNA. Involved in the processing of primary rRNA transcript to yield the immediate precursors to the large and small rRNAs (23S and 16S). Processes some mRNAs, and tRNAs when they are encoded in the rRNA operon. Processes pre-crRNA and tracrRNA of type II CRISPR loci if present in the organism. This is Ribonuclease 3 from Shouchella clausii (strain KSM-K16) (Alkalihalobacillus clausii).